The primary structure comprises 955 residues: Eukaryotic translation initiation factor 3 subunit C (955 aa).

2 disordered regions span residues 1-22 (MSRF…SEPV) and 157-299 (RAAP…EEGW). The span at 162 to 183 (DFAEEEEDDEREDEKGSDEEEE) shows a compositional bias: acidic residues. The segment covering 206–218 (VKPVADSDSSDWG) has biased composition (low complexity). Positions 219 to 229 (SDSDSDSTSSD) are enriched in acidic residues. Basic and acidic residues predominate over residues 230 to 250 (EDAKYTSIRDRFLKKPEKGTE). The span at 288-297 (MFDENEEEEE) shows a compositional bias: acidic residues. One can recognise a PCI domain in the interval 658-834 (FHMHINLELL…ETIVMHRSEP (177 aa)). Positions 865-955 (NFFQRGGNQG…RNVEYQNKAE (91 aa)) are disordered. Positions 882 to 894 (YRNQNQNQNWNNN) are enriched in low complexity. Positions 911 to 955 (GEGREQREHHRDHHRDQREHREHQNREFREQREQMRNVEYQNKAE) are enriched in basic and acidic residues.

It belongs to the eIF-3 subunit C family. Component of the eukaryotic translation initiation factor 3 (eIF-3) complex.

It localises to the cytoplasm. Component of the eukaryotic translation initiation factor 3 (eIF-3) complex, which is involved in protein synthesis of a specialized repertoire of mRNAs and, together with other initiation factors, stimulates binding of mRNA and methionyl-tRNAi to the 40S ribosome. The eIF-3 complex specifically targets and initiates translation of a subset of mRNAs involved in cell proliferation. The polypeptide is Eukaryotic translation initiation factor 3 subunit C (Anopheles gambiae (African malaria mosquito)).